The following is a 617-amino-acid chain: V-type proton ATPase catalytic subunit A (617 aa).

G250 to T257 contributes to the ATP binding site.

The protein belongs to the ATPase alpha/beta chains family. In terms of assembly, V-ATPase is a heteromultimeric enzyme made up of two complexes: the ATP-hydrolytic V1 complex and the proton translocation V0 complex. The V1 complex consists of three catalytic AB heterodimers that form a heterohexamer, three peripheral stalks each consisting of EG heterodimers, one central rotor including subunits D and F, and the regulatory subunits C and H. The proton translocation complex V0 consists of the proton transport subunit a, a ring of proteolipid subunits c9c'', rotary subunit d, subunits e and f, and the accessory subunits VhaAC45 and ATP6AP2.

It carries out the reaction ATP + H2O + 4 H(+)(in) = ADP + phosphate + 5 H(+)(out). With respect to regulation, ATP hydrolysis occurs at the interface between the nucleotide-binding domains of subunits A and B. ATP hydrolysis triggers a conformational change in the subunits D and F, which induces a shift of subunit d. The c-ring is subsequently rotated and results in a continuous proton translocation across the membrane. In terms of biological role, catalytic subunit of the V1 complex of vacuolar(H+)-ATPase (V-ATPase), a multisubunit enzyme composed of a peripheral complex (V1) that hydrolyzes ATP and a membrane integral complex (V0) that translocates protons. V-ATPase is responsible for acidifying and maintaining the pH of intracellular compartments and in some cell types, is targeted to the plasma membrane, where it is responsible for acidifying the extracellular environment. The protein is V-type proton ATPase catalytic subunit A (VHAA) of Manduca sexta (Tobacco hawkmoth).